The sequence spans 269 residues: Indole-3-glycerol phosphate synthase 1 (269 aa).

The protein belongs to the TrpC family.

The enzyme catalyses 1-(2-carboxyphenylamino)-1-deoxy-D-ribulose 5-phosphate + H(+) = (1S,2R)-1-C-(indol-3-yl)glycerol 3-phosphate + CO2 + H2O. It functions in the pathway amino-acid biosynthesis; L-tryptophan biosynthesis; L-tryptophan from chorismate: step 4/5. This chain is Indole-3-glycerol phosphate synthase 1 (trpC1), found in Streptomyces coelicolor (strain ATCC BAA-471 / A3(2) / M145).